Here is a 94-residue protein sequence, read N- to C-terminus: Small ribosomal subunit protein bS18 (94 aa).

Over residues Met-1–Glu-12 the composition is skewed to low complexity. The tract at residues Met-1–Lys-29 is disordered. The span at Arg-16 to Lys-29 shows a compositional bias: basic residues.

It belongs to the bacterial ribosomal protein bS18 family. In terms of assembly, part of the 30S ribosomal subunit. Forms a tight heterodimer with protein bS6.

In terms of biological role, binds as a heterodimer with protein bS6 to the central domain of the 16S rRNA, where it helps stabilize the platform of the 30S subunit. This Leuconostoc citreum (strain KM20) protein is Small ribosomal subunit protein bS18.